Reading from the N-terminus, the 559-residue chain is MAAPCGSELPANSPLKIPKMEVLSPASPGDLSDGNPSLSDPSTPRGASPLGPGSAAGSGAAASGGLGLGLGGRGAASSSVSFSPGGGSGGAAAAAAAACRGMSWTPAETNALIAVWGNERLVEARYQQLEGAGTVFGSKAPGPAMYERVSRALAELGYERTPSQCRERIKTLRRCYSRVKEHGVGKRKSSYTFEQLEQVFGQGGWDAQPCQPVLINSSGLYQELESDGSTMEDYSQEDWGNHSQELHGYPTDQELDEMPVSKRTLKIKQESSEEAQKRDTMQNIVQILESVQLKWELFQSWTDFSRLHLSNKLAIFGIGYNTRWKEDIRYHYAEISSQVPLGKRLREYFNSEKPEGRIIMTRVQKMNWKNVYYKFLEITISEARCLELHMEIDWIPIAHSKPTGGNVVQYLLPGGIPKSPGLYAIGYEECIERPLSPDVERHALDPGKEGRVDLETLSAQASLQVEVEPTRIIYCYLGIAEVRTLQQCLFLHFQANAKTFSKEWVGINGFLSQNCIVDPGVSPKSIYIKFVEVERDFLSAGSLVECLEKAIGYPLKFNN.

The segment at 1–62 (MAAPCGSELP…GSAAGSGAAA (62 aa)) is disordered. A phosphoserine mark is found at serine 13, serine 24, serine 27, serine 32, and serine 48. A compositionally biased stretch (low complexity) spans 46–61 (GASPLGPGSAAGSGAA). The Myb-like domain maps to 103–173 (SWTPAETNAL…QCRERIKTLR (71 aa)). Residues lysine 268 and lysine 343 each participate in a glycyl lysine isopeptide (Lys-Gly) (interchain with G-Cter in SUMO2) cross-link. Phosphoserine is present on serine 436.

This is Myb/SANT-like DNA-binding domain-containing protein 2 (Msantd2) from Mus musculus (Mouse).